The sequence spans 506 residues: NAD(P)H-quinone oxidoreductase subunit 2, chloroplastic (506 aa).

Helical transmembrane passes span leucine 15–tyrosine 35, cysteine 39–glycine 59, leucine 84–isoleucine 104, alanine 113–glycine 133, leucine 137–tyrosine 157, leucine 172–isoleucine 192, cysteine 217–phenylalanine 237, proline 249–valine 269, tryptophan 283–valine 303, isoleucine 339–phenylalanine 359, alanine 382–phenylalanine 402, serine 418–valine 438, and valine 471–valine 491.

This sequence belongs to the complex I subunit 2 family. As to quaternary structure, NDH is composed of at least 16 different subunits, 5 of which are encoded in the nucleus.

It is found in the plastid. Its subcellular location is the chloroplast thylakoid membrane. It catalyses the reaction a plastoquinone + NADH + (n+1) H(+)(in) = a plastoquinol + NAD(+) + n H(+)(out). The enzyme catalyses a plastoquinone + NADPH + (n+1) H(+)(in) = a plastoquinol + NADP(+) + n H(+)(out). Its function is as follows. NDH shuttles electrons from NAD(P)H:plastoquinone, via FMN and iron-sulfur (Fe-S) centers, to quinones in the photosynthetic chain and possibly in a chloroplast respiratory chain. The immediate electron acceptor for the enzyme in this species is believed to be plastoquinone. Couples the redox reaction to proton translocation, and thus conserves the redox energy in a proton gradient. This chain is NAD(P)H-quinone oxidoreductase subunit 2, chloroplastic, found in Nephroselmis olivacea (Green alga).